Reading from the N-terminus, the 534-residue chain is Lysophosphatidylcholine acyltransferase 1 (534 aa).

Residues 1–25 (MRLRGRGPRAAPSSSSGAGDARRLA) form a disordered region. Topologically, residues 1-57 (MRLRGRGPRAAPSSSSGAGDARRLAPPGRNPFVHELRLSALQKAQVAFMTLTLFPIR) are cytoplasmic. Low complexity predominate over residues 8 to 19 (PRAAPSSSSGAG). A helical; Signal-anchor for type II membrane protein membrane pass occupies residues 58–78 (LLFAAFMMLLAWPFALLASLG). Residues 79–534 (PPDKEPEQPL…GRKNSCKKAD (456 aa)) lie on the Lumenal side of the membrane. Residues 135–140 (HSSYFD) carry the HXXXXD motif motif. 2 consecutive EF-hand domains span residues 379–414 (PVSDALEDMFSLFDESGGGEIDLREYVVALSVVCRP) and 451–486 (VSELTVTDLFQAIDQEDKGRITFDDFCGFAEMYPDY). Ca(2+) contacts are provided by Asp-392, Ser-394, Glu-398, and Glu-403. The Di-lysine motif motif lies at 531 to 534 (KKAD).

The protein belongs to the 1-acyl-sn-glycerol-3-phosphate acyltransferase family. Predominantly expressed in lung where it is enriched in alveolar type II cells. Expressed at lower levels in spleen and brain. Also detected in erythroleukemic cells and reticulocytes. Weakly or not expressed in other tissues.

The protein localises to the endoplasmic reticulum membrane. Its subcellular location is the golgi apparatus membrane. It is found in the cell membrane. The protein resides in the lipid droplet. The catalysed reaction is a 1-acyl-sn-glycero-3-phosphocholine + an acyl-CoA = a 1,2-diacyl-sn-glycero-3-phosphocholine + CoA. The enzyme catalyses a 1-O-alkyl-sn-glycero-3-phosphocholine + acetyl-CoA = a 1-O-alkyl-2-acetyl-sn-glycero-3-phosphocholine + CoA. It carries out the reaction a 1-acyl-sn-glycero-3-phosphate + an acyl-CoA = a 1,2-diacyl-sn-glycero-3-phosphate + CoA. It catalyses the reaction a 1-O-(1Z-alkenyl)-sn-glycero-3-phosphocholine + an acyl-CoA = a 1-O-(1Z-alkenyl)-2-acyl-sn-glycero-3-phosphocholine + CoA. The catalysed reaction is 1-acyl-sn-glycero-3-phospho-(1'-sn-glycerol) + an acyl-CoA = a 1,2-diacyl-sn-glycero-3-phospho-(1'-sn-glycerol) + CoA. The enzyme catalyses 1-hexadecanoyl-sn-glycero-3-phosphocholine + hexadecanoyl-CoA = 1,2-dihexadecanoyl-sn-glycero-3-phosphocholine + CoA. It carries out the reaction 1-O-hexadecyl-sn-glycero-3-phosphocholine + hexadecanoyl-CoA = 1-O-hexadecyl-2-hexadecanoyl-sn-glycero-3-phosphocholine + CoA. It catalyses the reaction a 1-O-(1Z-alkenyl)-sn-glycero-3-phosphocholine + hexadecanoyl-CoA = 1-O-(1Z)-alkenyl-2-hexadecanoyl-sn-glycero-3-phosphocholine + CoA. The catalysed reaction is 1-hexadecanoyl-sn-glycero-3-phospho-(1'-sn-glycerol) + hexadecanoyl-CoA = 1,2-dihexadecanoyl-sn-glycero-3-phospho-(1'-sn-glycerol) + CoA. The enzyme catalyses 1-dodecanoyl-sn-glycero-3-phosphocholine + hexadecanoyl-CoA = 1-dodecanoyl-2-hexadecanoyl-sn-glycero-3-phosphocholine + CoA. It carries out the reaction 1-tetradecanoyl-sn-glycero-3-phosphocholine + hexadecanoyl-CoA = 1-tetradecanoyl-2-hexadecanoyl-sn-glycero-3-phosphocholine + CoA. It catalyses the reaction 1-O-octadecyl-sn-glycero-3-phosphocholine + hexadecanoyl-CoA = 1-O-octadecyl-2-hexadecanoyl-sn-glycero-3-phosphocholine + CoA. The catalysed reaction is 1-octadecanoyl-sn-glycero-3-phosphocholine + hexadecanoyl-CoA = 1-octadecanoyl-2-hexadecanoyl-sn-glycero-3-phosphocholine + CoA. The enzyme catalyses 1-(9Z-octadecenoyl)-sn-glycero-3-phosphocholine + hexadecanoyl-CoA = 1-(9Z-octadecenoyl)-2-hexadecanoyl-sn-glycero-3-phosphocholine + CoA. It carries out the reaction 1-eicosanoyl-sn-glycero-3-phosphocholine + hexadecanoyl-CoA = 1-eicosanoyl-2-hexadecanoyl-sn-glycero-3-phosphocholine + CoA. It catalyses the reaction hexanoyl-CoA + 1-hexadecanoyl-sn-glycero-3-phosphocholine = 1-hexadecanoyl-2-hexanoyl-sn-glycero-3-phosphocholine + CoA. The catalysed reaction is octanoyl-CoA + 1-hexadecanoyl-sn-glycero-3-phosphocholine = 1-hexadecanoyl-2-octanoyl-sn-glycero-3-phosphocholine + CoA. The enzyme catalyses decanoyl-CoA + 1-hexadecanoyl-sn-glycero-3-phosphocholine = 1-hexadecanoyl-2-decanoyl-sn-glycero-3-phosphocholine + CoA. It carries out the reaction dodecanoyl-CoA + 1-hexadecanoyl-sn-glycero-3-phosphocholine = 1-hexadecanoyl-2-dodecanoyl-sn-glycero-3-phosphocholine + CoA. It catalyses the reaction tetradecanoyl-CoA + 1-hexadecanoyl-sn-glycero-3-phosphocholine = 1-hexadecanoyl-2-tetradecanoyl-sn-glycero-3-phosphocholine + CoA. The catalysed reaction is 1-hexadecanoyl-sn-glycero-3-phosphocholine + (9Z)-octadecenoyl-CoA = 1-hexadecanoyl-2-(9Z-octadecenoyl)-sn-glycero-3-phosphocholine + CoA. The enzyme catalyses (9Z,12Z)-octadecadienoyl-CoA + 1-hexadecanoyl-sn-glycero-3-phosphocholine = 1-hexadecanoyl-2-(9Z,12Z-octadecadienoyl)-sn-glycero-3-phosphocholine + CoA. It carries out the reaction (4Z,7Z,10Z,13Z,16Z,19Z)-docosahexaenoyl-CoA + 1-hexadecanoyl-sn-glycero-3-phosphocholine = 1-hexadecanoyl-2-(4Z,7Z,10Z,13Z,16Z,19Z-docosahexaenoyl)-sn-glycero-3-phosphocholine + CoA. It catalyses the reaction 1-hexadecanoyl-sn-glycero-3-phosphocholine + acetyl-CoA = 1-hexadecanoyl-2-acetyl-sn-glycero-3-phosphocholine + CoA. The catalysed reaction is eicosanoyl-CoA + 1-hexadecanoyl-sn-glycero-3-phosphocholine = 1-hexadecanoyl-2-eicosanoyl-sn-glycero-3-phosphocholine + CoA. The enzyme catalyses 1-O-hexadecyl-sn-glycero-3-phosphocholine + acetyl-CoA = 1-O-hexadecyl-2-acetyl-sn-glycero-3-phosphocholine + CoA. It carries out the reaction a 1-acyl-sn-glycero-3-phosphocholine + hexadecanoyl-CoA = 1-acyl-2-hexadecanoyl-sn-glycero-3-phosphocholine + CoA. It catalyses the reaction a 1-acyl-sn-glycero-3-phosphate + hexadecanoyl-CoA = 1-acyl-2-hexadecanoyl-sn-glycero-3-phosphate + CoA. The catalysed reaction is 1-acyl-sn-glycero-3-phospho-(1'-sn-glycerol) + hexadecanoyl-CoA = 1-acyl-2-hexadecanoyl-sn-glycero-3-phospho-(1'-sn-glycerol) + CoA. Its pathway is lipid metabolism; phospholipid metabolism. Its activity is regulated as follows. Not activated by inflammatory stimulation. Inhibited by Cu(2+), Fe(2+), Ca(2+) and Mg(2+). Activity is not affected by Co(2+) or Mn(2+). Exhibits both acyltransferase and acetyltransferase activities. Activity is calcium-independent. Catalyzes the conversion of lysophosphatidylcholine (1-acyl-sn-glycero-3-phosphocholine or LPC) into phosphatidylcholine (1,2-diacyl-sn-glycero-3-phosphocholine or PC). Catalyzes the conversion 1-acyl-sn-glycerol-3-phosphate (lysophosphatidic acid or LPA) into 1,2-diacyl-sn-glycerol-3-phosphate (phosphatidic acid or PA) by incorporating an acyl moiety at the sn-2 position of the glycerol backbone. Displays a clear preference for saturated fatty acyl-CoAs, and 1-myristoyl or 1-palmitoyl LPC as acyl donors and acceptors, respectively. Involved in platelet-activating factor (PAF) biosynthesis by catalyzing the conversion of the PAF precursor, 1-O-alkyl-sn-glycero-3-phosphocholine (lyso-PAF) into 1-O-alkyl-2-acetyl-sn-glycero-3-phosphocholine (PAF). May synthesize phosphatidylcholine in pulmonary surfactant, thereby playing a pivotal role in respiratory physiology. Involved in the regulation of lipid droplet number and size. This is Lysophosphatidylcholine acyltransferase 1 (Lpcat1) from Mus musculus (Mouse).